Consider the following 182-residue polypeptide: Thioredoxin F-type, chloroplastic (182 aa).

The interval 1–22 is disordered; it reads MPLSLRLAPSPTALSPTTGGFS. The Thioredoxin domain occupies 52-177; sequence KRGDSSVVRC…LVAAIETARS (126 aa). Active-site nucleophile residues include Cys102 and Cys105. Cysteines 102 and 105 form a disulfide.

Belongs to the thioredoxin family. Plant F-type subfamily. In terms of assembly, forms a complex with heterodimeric ferredoxin-thioredoxin reductase (FTR) and ferredoxin.

It is found in the plastid. The protein resides in the chloroplast. Participates in various redox reactions through the reversible oxidation of the active center dithiol to a disulfide. The F form is known to activate a number of enzymes of the photosynthetic carbon cycle. The polypeptide is Thioredoxin F-type, chloroplastic (TRXF) (Brassica napus (Rape)).